The chain runs to 82 residues: Small ribosomal subunit protein uS17 (82 aa).

This sequence belongs to the universal ribosomal protein uS17 family. In terms of assembly, part of the 30S ribosomal subunit.

One of the primary rRNA binding proteins, it binds specifically to the 5'-end of 16S ribosomal RNA. The polypeptide is Small ribosomal subunit protein uS17 (Thermosynechococcus vestitus (strain NIES-2133 / IAM M-273 / BP-1)).